We begin with the raw amino-acid sequence, 1020 residues long: MQSCARAWGLRLGRGVGGGRRLAGGSGPCWAPRSRDSSSGGGDSAAAGASRLLERLLPRHDDFARRHIGPGDKDQREMLQTLGLASIDELIEKTVPANIRLKRPLKMEDPVCENEILATLHAISSKNQIWRSYIGMGYYNCSVPQTILRNLLENSGWITQYTPYQPEVSQGRLESLLNYQTMVCDITGLDMANASLLDEGTAAAEALQLCYRHNKRRKFLVDPRCHPQTIAVVQTRAKYTGVLTELKLPCEMDFSGKDVSGVLFQYPDTEGKVEDFTELVERAHQSGSLACCATDLLALCILRPPGEFGVDIALGSSQRFGVPLGYGGPHAAFFAVRESLVRMMPGRMVGVTRDATGKEVYRLALQTREQHIRRDKATSNICTAQALLANMAAMFAIYHGSHGLEHIARRVHNATLILSEGLKRAGHQLQHDLFFDTLKIQCGCSVKEVLGRAAQRQINFRLFEDGTLGISLDETVNEKDLDDLLWIFGCESSAELVAESMGEECRGIPGSVFKRTSPFLTHQVFNSYHSETNIVRYMKKLENKDISLVHSMIPLGSCTMKLNSSSELAPITWKEFANIHPFVPLDQAQGYQQLFRELEKDLCELTGYDQVCFQPNSGAQGEYAGLATIRAYLNQKGEGHRTVCLIPKSAHGTNPASAHMAGMKIQPVEVDKYGNIDAVHLKAMVDKHKENLAAIMITYPSTNGVFEENISDVCDLIHQHGGQVYLDGANMNAQVGICRPGDFGSDVSHLNLHKTFCIPHGGGGPGMGPIGVKKHLAPFLPNHPVISLKRNEDACPVGTVSAAPWGSSSILPISWAYIKMMGGKGLKQATETAILNANYMAKRLETHYRILFRGARGYVGHEFILDTRPFKKSANIEAVDVAKRLQDYGFHAPTMSWPVAGTLMVEPTESEDKAELDRFCDAMISIRQEIADIEEGRIDPRVNPLKMSPHSLTCVTSSHWDRPYSREVAAFPLPFVKPENKFWPTIARIDDIYGDQHLVCTCPPMEVYESPFSEQKRASS.

The N-terminal 35 residues, 1–35 (MQSCARAWGLRLGRGVGGGRRLAGGSGPCWAPRSR), are a transit peptide targeting the mitochondrion. The segment at 21-46 (RLAGGSGPCWAPRSRDSSSGGGDSAA) is disordered. An N6-acetyllysine mark is found at Lys-447, Lys-514, Lys-648, and Lys-664. Lys-754 bears the N6-(pyridoxal phosphate)lysine mark.

This sequence belongs to the GcvP family. As to quaternary structure, homodimer. Interacts with GCSH. The glycine cleavage system is composed of four proteins: P (GLDC), T (GCST), L (DLD) and H (GCSH). It depends on pyridoxal 5'-phosphate as a cofactor.

It is found in the mitochondrion. The catalysed reaction is N(6)-[(R)-lipoyl]-L-lysyl-[glycine-cleavage complex H protein] + glycine + H(+) = N(6)-[(R)-S(8)-aminomethyldihydrolipoyl]-L-lysyl-[glycine-cleavage complex H protein] + CO2. Its activity is regulated as follows. Stimulated by lipoic acid. Inhibited in presence of methylamine. Functionally, the glycine cleavage system catalyzes the degradation of glycine. The P protein (GLDC) binds the alpha-amino group of glycine through its pyridoxal phosphate cofactor; CO(2) is released and the remaining methylamine moiety is then transferred to the lipoamide cofactor of the H protein (GCSH). This chain is Glycine dehydrogenase (decarboxylating), mitochondrial, found in Homo sapiens (Human).